A 365-amino-acid polypeptide reads, in one-letter code: Class I histocompatibility antigen, Gogo-A*0401 alpha chain (365 aa).

The first 24 residues, Met-1–Ala-24, serve as a signal peptide directing secretion. The segment at Gly-25 to Asp-114 is alpha-1. Topologically, residues Gly-25–Ile-308 are extracellular. Asn-110 is a glycosylation site (N-linked (GlcNAc...) asparagine). The tract at residues Gly-115–Thr-206 is alpha-2. Intrachain disulfides connect Cys-125–Cys-188 and Cys-227–Cys-283. Positions Asp-207–Trp-298 are alpha-3. One can recognise an Ig-like C1-type domain in the interval Pro-209–Thr-295. Residues Glu-299–Ile-308 form a connecting peptide region. Residues Val-309 to Trp-332 traverse the membrane as a helical segment. Over Arg-333–Val-365 the chain is Cytoplasmic. The tract at residues Asp-338 to Val-365 is disordered. A compositionally biased stretch (low complexity) spans Gly-342–Ser-359. Position 343 is a phosphoserine (Ser-343). Phosphotyrosine is present on Tyr-344. Ser-345, Ser-349, Ser-350, Ser-352, Ser-356, and Ser-359 each carry phosphoserine.

The protein belongs to the MHC class I family. As to quaternary structure, heterodimer of an alpha chain and a beta chain (beta-2-microglobulin).

The protein localises to the membrane. Involved in the presentation of foreign antigens to the immune system. The chain is Class I histocompatibility antigen, Gogo-A*0401 alpha chain from Gorilla gorilla gorilla (Western lowland gorilla).